The chain runs to 232 residues: Small ribosomal subunit protein uS3 (232 aa).

The KH type-2 domain occupies 39–107 (VRQFLTSELK…PAQINIAEVR (69 aa)). The interval 213-232 (AANAVEPKGDKPKKQRKGRK) is disordered.

Belongs to the universal ribosomal protein uS3 family. In terms of assembly, part of the 30S ribosomal subunit. Forms a tight complex with proteins S10 and S14.

Its function is as follows. Binds the lower part of the 30S subunit head. Binds mRNA in the 70S ribosome, positioning it for translation. The polypeptide is Small ribosomal subunit protein uS3 (Vibrio parahaemolyticus serotype O3:K6 (strain RIMD 2210633)).